The sequence spans 255 residues: MRHALITAGSKGLGRKVTETLLAKGYSVTVNYRQDEEAVSRLKEACPDCLDRLQFVKGDVTKKEDLLRIAEAALNRFGRIDFLINNAGPYIFERKKLADYTDDEWYGMLEGNLSAVFHLFKAVIPIMRKQQFGRIITYGFQGAAHAPGWLHRSAFGAAKVGLASLTKTIAIEEAEFGITANMVCPGDIVGDMKEASIEEARMRIGKEKTPIGRSGTGEDIARIIAFLCEENSDLVTGTVIEATGGLNVINKNQTT.

7-14 (TAGSKGLG) contacts NAD(+).

Belongs to the short-chain dehydrogenases/reductases (SDR) family.

The protein is Putative oxidoreductase YtkK (ytkK) of Bacillus subtilis (strain 168).